The following is a 247-amino-acid chain: DNA polymerase sliding clamp (247 aa).

It belongs to the PCNA family. As to quaternary structure, homotrimer. The subunits circularize to form a toroid; DNA passes through its center. Replication factor C (RFC) is required to load the toroid on the DNA.

Functionally, sliding clamp subunit that acts as a moving platform for DNA processing. Responsible for tethering the catalytic subunit of DNA polymerase and other proteins to DNA during high-speed replication. The polypeptide is DNA polymerase sliding clamp (Thermofilum pendens (strain DSM 2475 / Hrk 5)).